Reading from the N-terminus, the 120-residue chain is Large ribosomal subunit protein bL12 (120 aa).

Belongs to the bacterial ribosomal protein bL12 family. Homodimer. Part of the ribosomal stalk of the 50S ribosomal subunit. Forms a multimeric L10(L12)X complex, where L10 forms an elongated spine to which 2 to 4 L12 dimers bind in a sequential fashion. Binds GTP-bound translation factors.

Functionally, forms part of the ribosomal stalk which helps the ribosome interact with GTP-bound translation factors. Is thus essential for accurate translation. The sequence is that of Large ribosomal subunit protein bL12 from Lactobacillus gasseri (strain ATCC 33323 / DSM 20243 / BCRC 14619 / CIP 102991 / JCM 1131 / KCTC 3163 / NCIMB 11718 / NCTC 13722 / AM63).